The following is a 408-amino-acid chain: Imidazolonepropionase (408 aa).

Histidine 73 and histidine 75 together coordinate Fe(3+). Positions 73 and 75 each coordinate Zn(2+). 4-imidazolone-5-propanoate is bound by residues arginine 82, tyrosine 145, and histidine 178. Residue tyrosine 145 participates in N-formimidoyl-L-glutamate binding. Fe(3+) is bound at residue histidine 243. Zn(2+) is bound at residue histidine 243. Position 246 (glutamine 246) interacts with 4-imidazolone-5-propanoate. Position 318 (aspartate 318) interacts with Fe(3+). Zn(2+) is bound at residue aspartate 318. Positions 320 and 322 each coordinate N-formimidoyl-L-glutamate. Serine 323 contributes to the 4-imidazolone-5-propanoate binding site.

This sequence belongs to the metallo-dependent hydrolases superfamily. HutI family. The cofactor is Zn(2+). Requires Fe(3+) as cofactor.

Its subcellular location is the cytoplasm. The enzyme catalyses 4-imidazolone-5-propanoate + H2O = N-formimidoyl-L-glutamate. The protein operates within amino-acid degradation; L-histidine degradation into L-glutamate; N-formimidoyl-L-glutamate from L-histidine: step 3/3. Catalyzes the hydrolytic cleavage of the carbon-nitrogen bond in imidazolone-5-propanoate to yield N-formimidoyl-L-glutamate. It is the third step in the universal histidine degradation pathway. In Shewanella halifaxensis (strain HAW-EB4), this protein is Imidazolonepropionase.